The chain runs to 387 residues: UDP-Gal:alpha-D-GlcNAc-diphosphoundecaprenol alpha-1,3-galactosyltransferase (387 aa).

It belongs to the glycosyltransferase group 1 family. Glycosyltransferase 4 subfamily. Requires Mg(2+) as cofactor. It depends on Mn(2+) as a cofactor. The cofactor is Fe(2+).

It carries out the reaction N-acetyl-alpha-D-glucosaminyl-di-trans,octa-cis-undecaprenyl diphosphate + UDP-alpha-D-galactose = alpha-D-Gal-(1-&gt;3)-alpha-D-GlcNAc-di-trans,octa-cis-undecaprenyl diphosphate + UDP + H(+). It participates in bacterial outer membrane biogenesis; LPS O-antigen biosynthesis. Its function is as follows. Involved in the biosynthesis of the lipopolysaccharide (LPS) O-antigen region. Catalyzes the transfer of galactose from UDP-galactose to GlcNAc-undecaprenyl diphosphate via an alpha1,3-linkage. Has strict substrate specificity. This chain is UDP-Gal:alpha-D-GlcNAc-diphosphoundecaprenol alpha-1,3-galactosyltransferase, found in Escherichia coli.